The primary structure comprises 447 residues: Adenylosuccinate synthetase (447 aa).

Residues 12 to 18 (GDEGKGK) and 40 to 42 (GHT) contribute to the GTP site. Catalysis depends on Asp13, which acts as the Proton acceptor. 2 residues coordinate Mg(2+): Asp13 and Gly40. IMP contacts are provided by residues 13–16 (DEGK), 38–41 (NAGH), Thr128, Arg142, Gln223, Thr238, and Arg302. His41 functions as the Proton donor in the catalytic mechanism. 298-304 (TTTGRKR) contacts substrate. GTP-binding positions include Arg304, 330–332 (KLD), and 412–414 (SLG).

Belongs to the adenylosuccinate synthetase family. In terms of assembly, homodimer. It depends on Mg(2+) as a cofactor.

It is found in the cytoplasm. The catalysed reaction is IMP + L-aspartate + GTP = N(6)-(1,2-dicarboxyethyl)-AMP + GDP + phosphate + 2 H(+). The protein operates within purine metabolism; AMP biosynthesis via de novo pathway; AMP from IMP: step 1/2. Its function is as follows. Plays an important role in the de novo pathway of purine nucleotide biosynthesis. Catalyzes the first committed step in the biosynthesis of AMP from IMP. The polypeptide is Adenylosuccinate synthetase (Trichormus variabilis (strain ATCC 29413 / PCC 7937) (Anabaena variabilis)).